The chain runs to 766 residues: Phospholipid phosphatase-related protein type 4 (766 aa).

S37 carries the phosphoserine modification. Helical transmembrane passes span 68–88 (LPCF…SLYF), 120–140 (AIPF…TIMV), 179–199 (FVGV…IIQL), and 248–268 (SFPS…SMYF). The N-linked (GlcNAc...) asparagine glycan is linked to N269. A run of 2 helical transmembrane segments spans residues 277–297 (KLLK…CGLT) and 309–329 (VYCG…YAVG). Residue S347 is modified to Phosphoserine. N363 carries an N-linked (GlcNAc...) asparagine glycan. Phosphoserine is present on S386. N-linked (GlcNAc...) asparagine glycosylation is present at N433. Position 439 is a phosphoserine (S439). Disordered regions lie at residues 454–503 (SKNE…GNQY) and 510–529 (TVPG…IQSR). The N-linked (GlcNAc...) asparagine glycan is linked to N456. A phosphoserine mark is found at S462 and S474. N-linked (GlcNAc...) asparagine glycosylation is found at N515 and N545. S608 carries the phosphoserine modification. Disordered stretches follow at residues 634–654 (PIIQ…KWKA), 672–705 (DSES…GITT), and 741–766 (PERS…PYKD). Positions 688–702 (RKRKHIDSNEHHHHG) are enriched in basic residues. Residues 743 to 752 (RSNSPENTRN) are compositionally biased toward polar residues.

Belongs to the PA-phosphatase related phosphoesterase family. O-glycosylated. Probably at Ser-347. Specifically expressed in neurons (at protein level).

The protein resides in the postsynaptic density membrane. Functionally, postsynaptic density membrane protein that indirectly regulates glutamatergic synaptic transmission through lysophosphatidic acid (LPA)-mediated signaling pathways. Binds lysophosphatidic acid (LPA) and mediates its internalization into cells. Could act as receptor or a transporter of this lipid at the post-synaptic membrane. Modulates lysophosphatidic acid (LPA) activity in neuron axonal outgrowth during development by attenuating phospholipid-induced axon collapse. This chain is Phospholipid phosphatase-related protein type 4, found in Rattus norvegicus (Rat).